Reading from the N-terminus, the 63-residue chain is Protease 2 small chain (63 aa).

In terms of domain architecture, Peptidase S8 spans 11–63 (QWGLSGTYGIRANTAWDNGYQGQGKIIAVVDTGITDHPDLLANRTSPLGYDFI).

It belongs to the peptidase S8 family. In terms of assembly, heterodimer of a large and a small chain.

It is found in the secreted. The sequence is that of Protease 2 small chain from Achromobacter lyticus.